The chain runs to 452 residues: Enolase (452 aa).

(2R)-2-phosphoglycerate is bound at residue glutamine 167. Glutamate 209 (proton donor) is an active-site residue. The Mg(2+) site is built by aspartate 250, glutamate 307, and aspartate 334. 4 residues coordinate (2R)-2-phosphoglycerate: lysine 359, arginine 388, serine 389, and lysine 410. Lysine 359 acts as the Proton acceptor in catalysis.

Belongs to the enolase family. Mg(2+) serves as cofactor.

The protein localises to the cytoplasm. Its subcellular location is the secreted. The protein resides in the cell surface. The catalysed reaction is (2R)-2-phosphoglycerate = phosphoenolpyruvate + H2O. It participates in carbohydrate degradation; glycolysis; pyruvate from D-glyceraldehyde 3-phosphate: step 4/5. Catalyzes the reversible conversion of 2-phosphoglycerate (2-PG) into phosphoenolpyruvate (PEP). It is essential for the degradation of carbohydrates via glycolysis. This chain is Enolase, found in Mesomycoplasma hyopneumoniae (strain 7448) (Mycoplasma hyopneumoniae).